We begin with the raw amino-acid sequence, 356 residues long: tRNA-specific 2-thiouridylase MnmA (356 aa).

ATP is bound by residues 6–13 (AMSGGVDS) and leucine 32. Cysteine 101 functions as the Nucleophile in the catalytic mechanism. Cysteine 101 and cysteine 193 are joined by a disulfide. Residue glycine 125 coordinates ATP. The segment at 143–145 (KDQ) is interaction with tRNA. Cysteine 193 serves as the catalytic Cysteine persulfide intermediate.

Belongs to the MnmA/TRMU family.

The protein localises to the cytoplasm. It carries out the reaction S-sulfanyl-L-cysteinyl-[protein] + uridine(34) in tRNA + AH2 + ATP = 2-thiouridine(34) in tRNA + L-cysteinyl-[protein] + A + AMP + diphosphate + H(+). Catalyzes the 2-thiolation of uridine at the wobble position (U34) of tRNA, leading to the formation of s(2)U34. This chain is tRNA-specific 2-thiouridylase MnmA, found in Mycolicibacterium smegmatis (strain ATCC 700084 / mc(2)155) (Mycobacterium smegmatis).